The following is a 346-amino-acid chain: S-adenosylmethionine:tRNA ribosyltransferase-isomerase (346 aa).

The protein belongs to the QueA family. As to quaternary structure, monomer.

The protein localises to the cytoplasm. The enzyme catalyses 7-aminomethyl-7-carbaguanosine(34) in tRNA + S-adenosyl-L-methionine = epoxyqueuosine(34) in tRNA + adenine + L-methionine + 2 H(+). It participates in tRNA modification; tRNA-queuosine biosynthesis. Its function is as follows. Transfers and isomerizes the ribose moiety from AdoMet to the 7-aminomethyl group of 7-deazaguanine (preQ1-tRNA) to give epoxyqueuosine (oQ-tRNA). The polypeptide is S-adenosylmethionine:tRNA ribosyltransferase-isomerase (Lactococcus lactis subsp. cremoris (strain MG1363)).